We begin with the raw amino-acid sequence, 268 residues long: MSAALFSLDSPVRGTPWPTEPAAFYEPGRVDKPGRGPEPGDLGELGSTTPAMYDDESAIDFSAYIDSMAAVPTLELCHDELFADLFNSNHKAAGAGGLELLQGGPTRPPGVGSVARGPLKREPDWGDGDAPGSLLPAQVAVCAQTVVSLAAAAQPTPPTSPEPPRGSPGPSLAPGTVREKGAGKRGPDRGSPEYRQRRERNNIAVRKSRDKAKRRNQEMQQKLVELSAENEKLHQRVEQLTRDLAGLRQFFKKLPSPPFLPPTGADCR.

Disordered regions lie at residues 1 to 48 (MSAA…LGST), 97 to 132 (GLELLQGGPTRPPGVGSVARGPLKREPDWGDGDAPG), and 152 to 219 (AAQP…NQEM). Ser-2 is subject to N-acetylserine. A Glycyl lysine isopeptide (Lys-Gly) (interchain with G-Cter in SUMO) cross-link involves residue Lys-120. The span at 155-167 (PTPPTSPEPPRGS) shows a compositional bias: pro residues. Residues 177 to 201 (VREKGAGKRGPDRGSPEYRQRRERN) show a composition bias toward basic and acidic residues. The bZIP domain occupies 191–254 (SPEYRQRRER…AGLRQFFKKL (64 aa)). The segment at 195–222 (RQRRERNNIAVRKSRDKAKRRNQEMQQK) is basic motif. The leucine-zipper stretch occupies residues 226 to 254 (LSAENEKLHQRVEQLTRDLAGLRQFFKKL).

It belongs to the bZIP family. C/EBP subfamily. Binds DNA as a homodimer and as a heterodimer. Can form stable heterodimers with CEBPA, CEBPB and CEBPE. Directly interacts with SPI1/PU.1; this interaction does not affect DNA-binding properties of each partner. Interacts with PRDM16.

The protein resides in the nucleus. In terms of biological role, transcription activator that recognizes two different DNA motifs: the CCAAT homology common to many promoters and the enhanced core homology common to many enhancers. Important transcription factor regulating the expression of genes involved in immune and inflammatory responses. Transcriptional activator that enhances IL6 transcription alone and as heterodimer with CEBPB. The protein is CCAAT/enhancer-binding protein delta (Cebpd) of Mus musculus (Mouse).